Reading from the N-terminus, the 72-residue chain is Protein CYSTEINE-RICH TRANSMEMBRANE MODULE 9 (72 aa).

Residues 1–22 are compositionally biased toward polar residues; it reads MNPSEQNHLSVEKPSQTSSGPY. The disordered stretch occupies residues 1–46; sequence MNPSEQNHLSVEKPSQTSSGPYTSPPPIGYPTRDAMVGDPPAAAVE. Residues 49 to 65 traverse the membrane as a helical segment; the sequence is SKGDGFWKGCCAAICCC.

Belongs to the CYSTM1 family. In terms of assembly, heterodimers. Interacts with WIH1/CYSTM13. Mostly expressed in roots and flowers and, to a lower extent, in stems, siliques and leaves.

The protein localises to the cell membrane. The protein resides in the nucleus. Involved in resistance to abiotic stress. In Arabidopsis thaliana (Mouse-ear cress), this protein is Protein CYSTEINE-RICH TRANSMEMBRANE MODULE 9.